Here is a 224-residue protein sequence, read N- to C-terminus: Homeobox protein Hox-B6 (224 aa).

An Antp-type hexapeptide motif is present at residues 127–132 (VYPWMQ). Positions 146-205 (GRRGRQTYTRYQTLELEKEFHYNRYLTRRRRIEIAHALCLTERQIKIWFQNRRMKWKKES) form a DNA-binding region, homeobox. Position 214 is a phosphoserine (Ser-214).

This sequence belongs to the Antp homeobox family.

It localises to the nucleus. Its function is as follows. Sequence-specific transcription factor which is part of a developmental regulatory system that provides cells with specific positional identities on the anterior-posterior axis. This is Homeobox protein Hox-B6 (Hoxb6) from Mus musculus (Mouse).